The following is a 223-amino-acid chain: MAGTSLVAGDVVVDALPYFDQGYDAQGVREAAAALVEEETRRYRPTKNYLSYLPTPDYSAFETEIMRNEFERLSSRQPLELLSMKRYELPAPLSGQRNDITAWQECVNNSMAQLEHQAVRIENLELMSQHGCNAWKVYNENLLHMIDCAQKDLQKLRKKIQDLNWQRKNSQLTAGARLREMESTWVSLVSKNYEIERAIVQMENEVYQLKERSGENKENIEDY.

Residues 139–223 (NENLLHMIDC…GENKENIEDY (85 aa)) adopt a coiled-coil conformation.

Belongs to the SPF27 family. Component of the pre-catalytic and catalytic spliceosome complexes. Component of the postcatalytic spliceosome P complex.

The protein resides in the nucleus. Required for pre-mRNA splicing as component of the activated spliceosome. May have a scaffolding role in the spliceosome assembly as it contacts all other components of the core complex. The chain is Pre-mRNA-splicing factor SPF27 (bcas2) from Xenopus tropicalis (Western clawed frog).